Here is a 338-residue protein sequence, read N- to C-terminus: RNA 3'-terminal phosphate cyclase (338 aa).

ATP-binding positions include Q103 and 283–287 (YLADQ). H308 acts as the Tele-AMP-histidine intermediate in catalysis.

This sequence belongs to the RNA 3'-terminal cyclase family. Type 1 subfamily.

The protein resides in the cytoplasm. It carries out the reaction a 3'-end 3'-phospho-ribonucleotide-RNA + ATP = a 3'-end 2',3'-cyclophospho-ribonucleotide-RNA + AMP + diphosphate. Catalyzes the conversion of 3'-phosphate to a 2',3'-cyclic phosphodiester at the end of RNA. The mechanism of action of the enzyme occurs in 3 steps: (A) adenylation of the enzyme by ATP; (B) transfer of adenylate to an RNA-N3'P to produce RNA-N3'PP5'A; (C) and attack of the adjacent 2'-hydroxyl on the 3'-phosphorus in the diester linkage to produce the cyclic end product. The biological role of this enzyme is unknown but it is likely to function in some aspects of cellular RNA processing. This chain is RNA 3'-terminal phosphate cyclase, found in Escherichia coli O8 (strain IAI1).